Reading from the N-terminus, the 441-residue chain is Probable D-serine dehydratase (441 aa).

Lysine 115 carries the N6-(pyridoxal phosphate)lysine modification.

Belongs to the serine/threonine dehydratase family. DsdA subfamily. The cofactor is pyridoxal 5'-phosphate.

The enzyme catalyses D-serine = pyruvate + NH4(+). This Fusobacterium nucleatum subsp. nucleatum (strain ATCC 25586 / DSM 15643 / BCRC 10681 / CIP 101130 / JCM 8532 / KCTC 2640 / LMG 13131 / VPI 4355) protein is Probable D-serine dehydratase.